Reading from the N-terminus, the 142-residue chain is HTH-type transcriptional regulator LysM (142 aa).

Positions 6–69 (IDESDLKILE…ELENEIRAIV (64 aa)) constitute an HTH asnC-type domain. Positions 25-44 (YTLIAKELKVSEAAIRKRIE) form a DNA-binding region, H-T-H motif.

As to quaternary structure, homotetramer.

The protein resides in the cytoplasm. Its pathway is amino-acid biosynthesis; L-lysine biosynthesis via AAA pathway [regulation]. Functionally, in the absence or at low concentrations of lysine, activates the biosynthesis of this amino acid via the alpha-aminoadipate (AAA) pathway. This chain is HTH-type transcriptional regulator LysM (lysM), found in Saccharolobus solfataricus (strain ATCC 35092 / DSM 1617 / JCM 11322 / P2) (Sulfolobus solfataricus).